A 251-amino-acid polypeptide reads, in one-letter code: Probable transcriptional regulatory protein MAB_2888c (251 aa).

Residues 1–20 (MSGHSKWATTKHQKAVKDAR) are disordered.

This sequence belongs to the TACO1 family.

Its subcellular location is the cytoplasm. The chain is Probable transcriptional regulatory protein MAB_2888c from Mycobacteroides abscessus (strain ATCC 19977 / DSM 44196 / CCUG 20993 / CIP 104536 / JCM 13569 / NCTC 13031 / TMC 1543 / L948) (Mycobacterium abscessus).